The sequence spans 77 residues: Acyl carrier protein (77 aa).

Residues 1–77 enclose the Carrier domain; it reads MSVEAKVKKI…DAIEYIRKKS (77 aa). Ser-37 carries the O-(pantetheine 4'-phosphoryl)serine modification.

The protein belongs to the acyl carrier protein (ACP) family. 4'-phosphopantetheine is transferred from CoA to a specific serine of apo-ACP by AcpS. This modification is essential for activity because fatty acids are bound in thioester linkage to the sulfhydryl of the prosthetic group.

It localises to the cytoplasm. The protein operates within lipid metabolism; fatty acid biosynthesis. Carrier of the growing fatty acid chain in fatty acid biosynthesis. This Desulforapulum autotrophicum (strain ATCC 43914 / DSM 3382 / VKM B-1955 / HRM2) (Desulfobacterium autotrophicum) protein is Acyl carrier protein.